Reading from the N-terminus, the 263-residue chain is Methylesterase 18 (263 aa).

The active-site Acyl-ester intermediate is S80. Catalysis depends on charge relay system residues D212 and H240.

Belongs to the AB hydrolase superfamily. Methylesterase family.

The catalysed reaction is methyl (indol-3-yl)acetate + H2O = (indol-3-yl)acetate + methanol + H(+). Its pathway is plant hormone biosynthesis. Its function is as follows. Methylesterase shown to have methyl indole-3-acetic acid (MeIAA) esterase activity in vitro. This is Methylesterase 18 from Arabidopsis thaliana (Mouse-ear cress).